The following is a 382-amino-acid chain: Leucine carboxyl methyltransferase 1 (382 aa).

Positions 1–11 (MSAPQIPNLNT) are enriched in polar residues. The segment at 1-45 (MSAPQIPNLNTLRRGGGRGRFRARGGPDSSSSSGNKDRVVQGTDN) is disordered. Residues Arg88, Gly121, Asp146, 193–194 (DL), and Glu230 each bind S-adenosyl-L-methionine.

Belongs to the methyltransferase superfamily. LCMT family.

The catalysed reaction is [phosphatase 2A protein]-C-terminal L-leucine + S-adenosyl-L-methionine = [phosphatase 2A protein]-C-terminal L-leucine methyl ester + S-adenosyl-L-homocysteine. In terms of biological role, methylates the carboxyl group of the C-terminal leucine residue of protein phosphatase 2A catalytic subunits to form alpha-leucine ester residues. The chain is Leucine carboxyl methyltransferase 1 (ppm1) from Emericella nidulans (strain FGSC A4 / ATCC 38163 / CBS 112.46 / NRRL 194 / M139) (Aspergillus nidulans).